We begin with the raw amino-acid sequence, 305 residues long: FMRFamide-related peptides type HF-4 (305 aa).

An N-terminal signal peptide occupies residues 1–19 (MTSLCLTIAPAVLSLICLS). 3 positions are modified to phenylalanine amide: Phe-36, Phe-47, and Phe-66. Ile-75 carries the isoleucine amide modification. 2 positions are modified to phenylalanine amide: Phe-84 and Phe-93. Ile-102 carries the post-translational modification Isoleucine amide. Phenylalanine amide occurs at positions 111, 120, 129, 138, 147, 156, and 165. Positions 168–305 (SVDGEIEAGV…EHKQEYMRFG (138 aa)) are excised as a propeptide.

The protein belongs to the FARP (FMRFamide related peptide) family. As to expression, central nervous system.

Its subcellular location is the secreted. Its function is as follows. Can function as both cardioregulatory hormones and transmitters and may regulate cardiovascular function. The sequence is that of FMRFamide-related peptides type HF-4 from Cornu aspersum (Brown garden snail).